The sequence spans 199 residues: 5'-deoxynucleotidase YfbR (199 aa).

Residues 18 to 19 (RW) and H33 each bind substrate. The 113-residue stretch at 30–142 (VSEHSLQVAM…VKQADALCAY (113 aa)) folds into the HD domain. Positions 33, 68, and 69 each coordinate a divalent metal cation. Residues D69, 77-80 (DLPT), and D137 each bind substrate. D137 is an a divalent metal cation binding site.

Belongs to the 5DNU family. As to quaternary structure, homodimer. A divalent metal cation serves as cofactor.

It is found in the cytoplasm. The enzyme catalyses a 2'-deoxyribonucleoside 5'-phosphate + H2O = a 2'-deoxyribonucleoside + phosphate. Its function is as follows. Catalyzes the strictly specific dephosphorylation of 2'-deoxyribonucleoside 5'-monophosphates. The protein is 5'-deoxynucleotidase YfbR of Salmonella typhi.